We begin with the raw amino-acid sequence, 335 residues long: Dihydroorotate dehydrogenase (quinone) (335 aa).

FMN is bound by residues 58–62 (AGADK) and threonine 82. Substrate is bound at residue lysine 62. 107–111 (NRNGF) serves as a coordination point for substrate. Residues asparagine 135 and asparagine 168 each coordinate FMN. A substrate-binding site is contributed by asparagine 168. Serine 171 acts as the Nucleophile in catalysis. Residue asparagine 173 participates in substrate binding. FMN contacts are provided by lysine 213 and glycine 241. 242 to 243 (NT) is a binding site for substrate. FMN is bound by residues glycine 264, glycine 293, and 314-315 (YS).

This sequence belongs to the dihydroorotate dehydrogenase family. Type 2 subfamily. Monomer. FMN serves as cofactor.

The protein resides in the cell membrane. It catalyses the reaction (S)-dihydroorotate + a quinone = orotate + a quinol. The protein operates within pyrimidine metabolism; UMP biosynthesis via de novo pathway; orotate from (S)-dihydroorotate (quinone route): step 1/1. In terms of biological role, catalyzes the conversion of dihydroorotate to orotate with quinone as electron acceptor. In Actinobacillus pleuropneumoniae serotype 5b (strain L20), this protein is Dihydroorotate dehydrogenase (quinone).